The sequence spans 243 residues: Carboxy-S-adenosyl-L-methionine synthase (243 aa).

Residues Tyr40, 65-67 (GCS), 90-91 (DN), 118-119 (DI), Asn133, and Arg200 each bind S-adenosyl-L-methionine.

This sequence belongs to the class I-like SAM-binding methyltransferase superfamily. Cx-SAM synthase family. In terms of assembly, homodimer.

It catalyses the reaction prephenate + S-adenosyl-L-methionine = carboxy-S-adenosyl-L-methionine + 3-phenylpyruvate + H2O. Its function is as follows. Catalyzes the conversion of S-adenosyl-L-methionine (SAM) to carboxy-S-adenosyl-L-methionine (Cx-SAM). The polypeptide is Carboxy-S-adenosyl-L-methionine synthase (Shewanella sp. (strain MR-7)).